The chain runs to 315 residues: Gamma-hemolysin component C (315 aa).

A signal peptide spans 1-29; sequence MLKNKILATTLSVSLLAPLANPLLENAKA.

The protein belongs to the aerolysin family. Toxicity requires sequential binding and synergistic association of a class S and a class F component which form heterooligomeric complexes. HlgC (class S) associates with HlgB (class F) thus forming an CB toxin.

Its function is as follows. Toxin that seems to act by forming pores in the membrane of the cell. Has a hemolytic and a leucotoxic activity. The polypeptide is Gamma-hemolysin component C (hlgC) (Staphylococcus aureus (strain MRSA252)).